Reading from the N-terminus, the 454-residue chain is tRNA modification GTPase MnmE (454 aa).

(6S)-5-formyl-5,6,7,8-tetrahydrofolate-binding residues include Arg23, Glu80, and Lys120. One can recognise a TrmE-type G domain in the interval 216 to 377; the sequence is GMKVVIAGRP…LRNNLKQSMG (162 aa). A K(+)-binding site is contributed by Asn226. Residues 226-231, 245-251, 270-273, 335-338, and 358-360 each bind GTP; these read NAGKSS, TDIAGTT, DTAG, NKAD, and SAR. Ser230 is a Mg(2+) binding site. K(+)-binding residues include Thr245, Ile247, and Thr250. Thr251 is a Mg(2+) binding site. Lys454 is a binding site for (6S)-5-formyl-5,6,7,8-tetrahydrofolate.

It belongs to the TRAFAC class TrmE-Era-EngA-EngB-Septin-like GTPase superfamily. TrmE GTPase family. As to quaternary structure, homodimer. Heterotetramer of two MnmE and two MnmG subunits. Requires K(+) as cofactor.

Its subcellular location is the cytoplasm. Exhibits a very high intrinsic GTPase hydrolysis rate. Involved in the addition of a carboxymethylaminomethyl (cmnm) group at the wobble position (U34) of certain tRNAs, forming tRNA-cmnm(5)s(2)U34. The polypeptide is tRNA modification GTPase MnmE (Salmonella paratyphi A (strain AKU_12601)).